Reading from the N-terminus, the 2364-residue chain is Cytotoxin-L (2364 aa).

A four-helical bundle region spans residues methionine 1–leucine 91. One can recognise a GT44 domain in the interval lysine 96 to leucine 468. The glucosyltransferase region stretch occupies residues lysine 96–leucine 468. Residues isoleucine 101–isoleucine 103, asparagine 139, leucine 265–aspartate 270, and aspartate 286–aspartate 288 contribute to the UDP-alpha-D-glucose site. The Mg(2+) site is built by aspartate 288, glutamate 515, and serine 518. Serine 518–tryptophan 520 is a UDP-alpha-D-glucose binding site. The tract at residues glycine 544 to threonine 799 is autoprocessing region. Residues glutamate 545 and aspartate 546 each contribute to the Zn(2+) site. Residues serine 567–serine 774 form the Peptidase C80 domain. 3 residues coordinate 1D-myo-inositol hexakisphosphate: tyrosine 577, lysine 600, and lysine 647. Position 653 (histidine 653) interacts with Zn(2+). Histidine 653 serves as the catalytic For protease activity. Residue cysteine 698 is the Nucleophile; for protease activity of the active site. Histidine 757 lines the Zn(2+) pocket. Residues lysine 764, lysine 775, and lysine 792 each coordinate 1D-myo-inositol hexakisphosphate. Positions leucine 800 to proline 1500 are translocation region. Interaction with host SEMA6A and SEMA6B stretches follow at residues cysteine 1433–glutamate 1438, aspartate 1466–tyrosine 1471, phenylalanine 1484–arginine 1495, asparagine 1504–lysine 1511, and tyrosine 1596–proline 1601. 19 Cell wall-binding repeats span residues valine 1833–asparagine 1852, isoleucine 1854–glycine 1873, serine 1876–leucine 1895, phenylalanine 1926–alanine 1945, alanine 1946–glutamate 1965, leucine 1967–methionine 1986, glutamine 1987–methionine 2006, glutamine 2007–arginine 2026, tyrosine 2057–alanine 2076, valine 2077–glutamate 2097, cysteine 2099–arginine 2118, glutamine 2119–isoleucine 2138, glutamate 2139–valine 2158, glutamate 2209–proline 2224, lysine 2227–methionine 2249, lysine 2250–methionine 2269, glutamine 2270–methionine 2289, tyrosine 2320–alanine 2339, and alanine 2340–glutamate 2359. Residues glycine 1835 to glutamate 2364 form a receptor-binding (CROPS) region region.

This sequence belongs to the clostridial glucosylating toxin (LCGT) family. In terms of assembly, homomultimer; forms an inactive homomultimer at pH 8, which dissociates at pH 4, leading to cytotoxicity. Interacts with host SEMA6A; interaction promotes toxin entry into host cell. Interacts with host SEMA6B; interaction promotes toxin entry into host cell. The cofactor is Zn(2+). Mn(2+) is required as a cofactor. Mg(2+) serves as cofactor. Undergoes autocatalytic cleavage to release the N-terminal part (Glucosyltransferase TcsL), which constitutes the active part of the toxin, in the host cytosol. 1D-myo-inositol hexakisphosphate-binding (InsP6) activates the peptidase C80 domain and promotes autoprocessing.

The protein localises to the secreted. The protein resides in the host endosome membrane. Its subcellular location is the host cytoplasm. It is found in the host cytosol. It localises to the host cell membrane. It catalyses the reaction L-threonyl-[protein] + UDP-alpha-D-glucose = 3-O-(alpha-D-glucosyl)-L-threonyl-[protein] + UDP + H(+). Protease activity is activated upon binding to 1D-myo-inositol hexakisphosphate (InsP6), which induces conformational reorganization. Precursor of a cytotoxin that targets the vascular endothelium, inducing an anti-inflammatory effect and resulting in lethal toxic shock syndrome. TcsL constitutes the main toxin that mediates the pathology of P.sordellii infection, an anaerobic Gram-positive bacterium found in soil and in the gastrointestinal and vaginal tracts of animals and humans; although the majority of carriers are asymptomatic, pathogenic P.sordellii infections arise rapidly and are highly lethal. This form constitutes the precursor of the toxin: it enters into host cells and mediates autoprocessing to release the active toxin (Glucosyltransferase TcsL) into the host cytosol. Targets vascular endothelium by binding to the semaphorin proteins SEMA6A and SEMA6B, and enters host cells via clathrin-mediated endocytosis. Once entered into host cells, acidification in the endosome promotes the membrane insertion of the translocation region and formation of a pore, leading to translocation of the GT44 and peptidase C80 domains across the endosomal membrane. This activates the peptidase C80 domain and autocatalytic processing, releasing the N-terminal part (Glucosyltransferase TcsL), which constitutes the active part of the toxin, in the cytosol. In terms of biological role, active form of the toxin, which is released into the host cytosol following autoprocessing and inactivates small GTPases. Acts by mediating monoglucosylation of small GTPases of the Ras (H-Ras/HRAS, K-Ras/KRAS and N-Ras/NRAS) family in host cells at the conserved threonine residue located in the switch I region ('Thr-37/35'), using UDP-alpha-D-glucose as the sugar donor. Does not catalyze monoglucosylation of Ral/RALA. Also able to catalyze monoglucosylation of some members of the Rho family (Rac1 and Rap2A), but with less efficiency than with Ras proteins. Monoglucosylation of host small GTPases completely prevents the recognition of the downstream effector, blocking the GTPases in their inactive form and leading to apoptosis. Induces an anti-inflammatory effect, mainly by inactivating Ras proteins which results in blockage of the cell cycle and killing of immune cells. The absence or moderate local inflammatory response allows C.sordellii spreading in deep tissues, production of toxin which is released in the general circulation and causes a toxic shock syndrome. The protein is Cytotoxin-L of Paraclostridium sordellii (Clostridium sordellii).